Reading from the N-terminus, the 137-residue chain is Large ribosomal subunit protein uL13 (137 aa).

It belongs to the universal ribosomal protein uL13 family. In terms of assembly, part of the 50S ribosomal subunit.

In terms of biological role, this protein is one of the early assembly proteins of the 50S ribosomal subunit, although it is not seen to bind rRNA by itself. It is important during the early stages of 50S assembly. The sequence is that of Large ribosomal subunit protein uL13 from Methanococcus maripaludis (strain DSM 14266 / JCM 13030 / NBRC 101832 / S2 / LL).